Consider the following 100-residue polypeptide: Small ribosomal subunit protein bS21 (100 aa).

The interval Lys-61 to Arg-100 is disordered. A compositionally biased stretch (gly residues) spans Ala-78 to Arg-100.

This sequence belongs to the bacterial ribosomal protein bS21 family.

The polypeptide is Small ribosomal subunit protein bS21 (Rhodopseudomonas palustris (strain BisB18)).